Here is a 405-residue protein sequence, read N- to C-terminus: Cytoplasmic tRNA 2-thiolation protein 2 (405 aa).

This sequence belongs to the CTU2/NCS2 family.

It localises to the cytoplasm. The protein operates within tRNA modification; 5-methoxycarbonylmethyl-2-thiouridine-tRNA biosynthesis. Functionally, plays a central role in 2-thiolation of mcm(5)S(2)U at tRNA wobble positions of tRNA(Lys), tRNA(Glu) and tRNA(Gln). May act by forming a heterodimer with NCS6/CTU1 that ligates sulfur from thiocarboxylated URM1 onto the uridine of tRNAs at wobble position. This Drosophila melanogaster (Fruit fly) protein is Cytoplasmic tRNA 2-thiolation protein 2.